We begin with the raw amino-acid sequence, 60 residues long: DNA gyrase inhibitor YacG (60 aa).

Residues Cys-3, Cys-6, Cys-18, and Cys-22 each coordinate Zn(2+). A disordered region spans residues 38 to 60 (PASSEDEEEPLDQEAETPVAPRH). The span at 41–52 (SEDEEEPLDQEA) shows a compositional bias: acidic residues.

Belongs to the DNA gyrase inhibitor YacG family. In terms of assembly, interacts with GyrB. It depends on Zn(2+) as a cofactor.

Its function is as follows. Inhibits all the catalytic activities of DNA gyrase by preventing its interaction with DNA. Acts by binding directly to the C-terminal domain of GyrB, which probably disrupts DNA binding by the gyrase. The chain is DNA gyrase inhibitor YacG from Ruegeria pomeroyi (strain ATCC 700808 / DSM 15171 / DSS-3) (Silicibacter pomeroyi).